Reading from the N-terminus, the 455-residue chain is GTPase Der (455 aa).

EngA-type G domains are found at residues 4-174 and 183-358; these read PIVA…PAGQ and LKIA…SERN. GTP-binding positions include 10 to 17, 57 to 61, 126 to 129, 189 to 196, 236 to 240, and 301 to 304; these read GRPNVGKS, DTAGL, NKAD, DTAGI, and NKWD. Residues 359–444 enclose the KH-like domain; it reads KRVSTSDINN…PIILVFKGRE (86 aa).

This sequence belongs to the TRAFAC class TrmE-Era-EngA-EngB-Septin-like GTPase superfamily. EngA (Der) GTPase family. In terms of assembly, associates with the 50S ribosomal subunit.

Its function is as follows. GTPase that plays an essential role in the late steps of ribosome biogenesis. This is GTPase Der from Herpetosiphon aurantiacus (strain ATCC 23779 / DSM 785 / 114-95).